We begin with the raw amino-acid sequence, 453 residues long: Homogentisate 1,2-dioxygenase (453 aa).

Residues 1 to 42 form a disordered region; the sequence is MLEKAEKQRRAGSGQQRAAGYMPGFGNDFETESLPGALPQGQ. H306 acts as the Proton acceptor in catalysis. Residues H349 and E355 each coordinate Fe cation. Residues Y364 and H385 each contribute to the homogentisate site. Position 385 (H385) interacts with Fe cation.

Belongs to the homogentisate dioxygenase family. In terms of assembly, hexamer; dimer of trimers. Fe cation serves as cofactor.

The catalysed reaction is homogentisate + O2 = 4-maleylacetoacetate + H(+). It functions in the pathway amino-acid degradation; L-phenylalanine degradation; acetoacetate and fumarate from L-phenylalanine: step 4/6. Its function is as follows. Involved in the catabolism of homogentisate (2,5-dihydroxyphenylacetate or 2,5-OH-PhAc), a central intermediate in the degradation of phenylalanine and tyrosine. Catalyzes the oxidative ring cleavage of the aromatic ring of homogentisate to yield maleylacetoacetate. This chain is Homogentisate 1,2-dioxygenase, found in Rhizobium meliloti (strain 1021) (Ensifer meliloti).